A 384-amino-acid chain; its full sequence is uncharacterized protein (384 aa).

The region spanning 137–303 (EHDAPNRLWQ…VPGSRYQPSA (167 aa)) is the Integrase catalytic domain.

This is an uncharacterized protein from Escherichia coli (strain K12).